The following is a 118-amino-acid chain: IgW heavy chain V region W26 (118 aa).

In terms of domain architecture, Ig-like spans Asn-1 to Thr-109. The cysteines at positions 22 and 93 are disulfide-linked.

In terms of tissue distribution, expressed mainly in lymphoid tissues including spleen, epigonal organ and circulating lymphocytes.

The chain is IgW heavy chain V region W26 from Heterodontus francisci (Horn shark).